A 566-amino-acid chain; its full sequence is Intracellular exo-alpha-(1-&gt;5)-L-arabinofuranosidase (566 aa).

The span at 1–12 shows a compositional bias: polar residues; the sequence is MTTHNSQYSAET. The tract at residues 1 to 39 is disordered; that stretch reads MTTHNSQYSAETTHPDKQESSPAPTAAGTTASNVSTTGN. Positions 20 to 32 are enriched in low complexity; that stretch reads SSPAPTAAGTTAS. The alpha-L-arabinofuranose site is built by Glu69, Asn114, and Asn214. Residue Glu215 is the Proton donor/acceptor of the active site. Positions 286, 340, and 409 each coordinate alpha-L-arabinofuranose. Glu340 acts as the Nucleophile in catalysis.

It belongs to the glycosyl hydrolase 51 family. As to quaternary structure, homohexamer; trimer of dimers.

It localises to the cytoplasm. The enzyme catalyses Hydrolysis of terminal non-reducing alpha-L-arabinofuranoside residues in alpha-L-arabinosides.. Its pathway is glycan metabolism; L-arabinan degradation. With respect to regulation, completely inhibited by Hg(2+) and Cu(2+) ions, whereas 1 mM Zn(2+) inhibited activity by 51%. Involved in the degradation of arabinan and is a key enzyme in the complete degradation of the plant cell wall. Catalyzes the cleavage of terminal alpha-(1-&gt;5)-arabinofuranosyl bonds in different hemicellulosic homopolysaccharides (branched and debranched arabinans). It is active with sugar beet arabinan and wheat arabinoxylan. It also exhibited activity against alpha-(1-&gt;5)-linked arabinobiose, arabinotriose, arabinotetraose, and arabinopentaose. This chain is Intracellular exo-alpha-(1-&gt;5)-L-arabinofuranosidase (abfB), found in Bifidobacterium longum.